The sequence spans 243 residues: Probable heat shock transcription factor (243 aa).

Residues Ile9–Arg102 mediate DNA binding. Positions Gln121–Ile164 are involved in trimerization.

Belongs to the HSF family. Homotrimer. Homotrimerization increases the affinity of HSF1 to DNA.

The protein localises to the nucleus. Functionally, DNA-binding transcription factor that specifically binds heat shock promoter elements (HSE) and activates transcription. The protein is Probable heat shock transcription factor of Vairimorpha ceranae (strain BRL01) (Microsporidian parasite).